A 407-amino-acid chain; its full sequence is Protein ZNF365 (407 aa).

At Ser-16 the chain carries Phosphoserine. Residues 26–51 form a C2H2-type; degenerate zinc finger; sequence LRCPRCGDHTRFRSLSSLRAHLEFSH. Ser-138 carries the post-translational modification Phosphoserine. The stretch at 169 to 297 forms a coiled coil; it reads VEAVDRTIEK…QLEYYQSQQA (129 aa). Thr-175 is subject to Phosphothreonine. Residues 347 to 392 form a disordered region; that stretch reads LKKAKDDRASMQPAKAIHEQAESSRDLCRPPKKGELLGFGRKGNIR. Residues 362–381 show a composition bias toward basic and acidic residues; that stretch reads AIHEQAESSRDLCRPPKKGE. Ser-369 is subject to Phosphoserine.

As to quaternary structure, homodimer. Interacts with NDE1 and NDEL1. Does not interact with TUBG1. Interacts with DISC1. Interacts with PARP1. Interacts with MCRS1. Isoform 1 is expressed in brain. Isoform 2 is expressed in placenta and at low level in lung and liver. Isoform 3 is expressed in kidney and pancreas. Isoform 1 is expressed exclusively in brain.

Its subcellular location is the cytoplasm. It localises to the cytoskeleton. The protein resides in the microtubule organizing center. The protein localises to the centrosome. Its function is as follows. Involved in the regulation of neurogenesis. Negatively regulates neurite outgrowth. Involved in the morphogenesis of basket cells in the somatosensory cortex during embryogenesis. Involved in the positive regulation of oligodendrocyte differentiation during postnatal growth. Involved in dendritic arborization, morphogenesis of spine density dendrite, and establishment of postsynaptic dendrite density in cortical pyramidal neurons. Involved in homologous recombination (HR) repair pathway. Required for proper resolution of DNA double-strand breaks (DSBs) by HR. Is required for recovery of stalled replication forks, and directly contributes to genomic stability. Interacts with PARP1 and mediates MRE11-dependent DNA end resection during replication fork recovery. Contributes to genomic stability by preventing telomere dysfunction. This is Protein ZNF365 (ZNF365) from Homo sapiens (Human).